The chain runs to 368 residues: MNDETAPTNKSQEKAELRRGWTTGACATAATKAALTALITGEFPDPVGIILPKGEVPYFQLAYEGLGDGYAMAGIVKDAGDDPDVTHGATIISTVFPAPPGTGVVFRAGEGVGTVTRPGLQIPPGEAAINPVPRRMMTEICEQICAEYGLPADIVITISVPGGEEIAKKTWNPRLGIVGGISILGTTGVVHPFSCSAWIHSIHRGIDVARAAGQKHVLGATGSTSEDAAQALYDLPDFAILDMGDFAGGVLKYLREHPIDKLTIAGGFAKLTKLAQGALDLHSSRSQVDKSFLWTLAEKAGAPESMKDQILFANTALEVLELTQSIGLDMATPIALKAKETALETLRGAPVAVEIIVTDRSGNILARV.

This sequence belongs to the CbiD family.

The enzyme catalyses Co-precorrin-5B + S-adenosyl-L-methionine = Co-precorrin-6A + S-adenosyl-L-homocysteine. It participates in cofactor biosynthesis; adenosylcobalamin biosynthesis; cob(II)yrinate a,c-diamide from sirohydrochlorin (anaerobic route): step 6/10. Its function is as follows. Catalyzes the methylation of C-1 in cobalt-precorrin-5B to form cobalt-precorrin-6A. The chain is Cobalt-precorrin-5B C(1)-methyltransferase from Brucella anthropi (strain ATCC 49188 / DSM 6882 / CCUG 24695 / JCM 21032 / LMG 3331 / NBRC 15819 / NCTC 12168 / Alc 37) (Ochrobactrum anthropi).